The sequence spans 398 residues: Elongation factor Tu (398 aa).

The tr-type G domain occupies 10–207; the sequence is KPHVNIGTIG…TVDEYIPEPE (198 aa). Positions 19–26 are G1; the sequence is GHVDHGKT. A GTP-binding site is contributed by 19–26; it reads GHVDHGKT. A Mg(2+)-binding site is contributed by T26. The tract at residues 63–67 is G2; that stretch reads GITIN. Positions 84–87 are G3; sequence DAPG. Residues 84–88 and 139–142 each bind GTP; these read DAPGH and NKVD. Positions 139-142 are G4; the sequence is NKVD. Residues 177 to 179 form a G5 region; that stretch reads SAL.

This sequence belongs to the TRAFAC class translation factor GTPase superfamily. Classic translation factor GTPase family. EF-Tu/EF-1A subfamily. In terms of assembly, monomer.

It is found in the cytoplasm. The enzyme catalyses GTP + H2O = GDP + phosphate + H(+). GTP hydrolase that promotes the GTP-dependent binding of aminoacyl-tRNA to the A-site of ribosomes during protein biosynthesis. The sequence is that of Elongation factor Tu from Streptococcus suis (strain 98HAH33).